The following is a 264-amino-acid chain: tRNA (guanine-N(1)-)-methyltransferase (264 aa).

Residues G113 and 133–138 (IGDYVL) contribute to the S-adenosyl-L-methionine site. A disordered region spans residues 244–264 (VQQAATPGGQRRPPWHRDSRA).

It belongs to the RNA methyltransferase TrmD family. In terms of assembly, homodimer.

The protein localises to the cytoplasm. The enzyme catalyses guanosine(37) in tRNA + S-adenosyl-L-methionine = N(1)-methylguanosine(37) in tRNA + S-adenosyl-L-homocysteine + H(+). Its function is as follows. Specifically methylates guanosine-37 in various tRNAs. In Frankia alni (strain DSM 45986 / CECT 9034 / ACN14a), this protein is tRNA (guanine-N(1)-)-methyltransferase.